The primary structure comprises 294 residues: Cytidine deaminase (294 aa).

CMP/dCMP-type deaminase domains follow at residues 48 to 168 (DEDA…FGPK) and 186 to 294 (LTGD…VLLA). 89 to 91 (NME) lines the substrate pocket. Zn(2+) is bound at residue H102. E104 (proton donor) is an active-site residue. C129 and C132 together coordinate Zn(2+).

This sequence belongs to the cytidine and deoxycytidylate deaminase family. As to quaternary structure, homodimer. It depends on Zn(2+) as a cofactor.

It catalyses the reaction cytidine + H2O + H(+) = uridine + NH4(+). The catalysed reaction is 2'-deoxycytidine + H2O + H(+) = 2'-deoxyuridine + NH4(+). Functionally, this enzyme scavenges exogenous and endogenous cytidine and 2'-deoxycytidine for UMP synthesis. In Escherichia coli O157:H7, this protein is Cytidine deaminase.